The primary structure comprises 230 residues: Fibrillarin-like rRNA/tRNA 2'-O-methyltransferase (230 aa).

S-adenosyl-L-methionine-binding positions include 87 to 88 (TT), 105 to 106 (EF), 130 to 131 (DA), and 150 to 153 (DVAQ).

It belongs to the methyltransferase superfamily. Fibrillarin family. Interacts with nop5. Component of box C/D small ribonucleoprotein (sRNP) particles that contain rpl7ae, FlpA and nop5, plus a guide RNA.

In terms of biological role, involved in pre-rRNA and tRNA processing. Utilizes the methyl donor S-adenosyl-L-methionine to catalyze the site-specific 2'-hydroxyl methylation of ribose moieties in rRNA and tRNA. Site specificity is provided by a guide RNA that base pairs with the substrate. Methylation occurs at a characteristic distance from the sequence involved in base pairing with the guide RNA. This chain is Fibrillarin-like rRNA/tRNA 2'-O-methyltransferase, found in Methanococcus maripaludis (strain C6 / ATCC BAA-1332).